The primary structure comprises 464 residues: Probable glycine dehydrogenase (decarboxylating) subunit 1 (464 aa).

Belongs to the GcvP family. N-terminal subunit subfamily. In terms of assembly, the glycine cleavage system is composed of four proteins: P, T, L and H. In this organism, the P 'protein' is a heterodimer of two subunits.

It catalyses the reaction N(6)-[(R)-lipoyl]-L-lysyl-[glycine-cleavage complex H protein] + glycine + H(+) = N(6)-[(R)-S(8)-aminomethyldihydrolipoyl]-L-lysyl-[glycine-cleavage complex H protein] + CO2. The glycine cleavage system catalyzes the degradation of glycine. The P protein binds the alpha-amino group of glycine through its pyridoxal phosphate cofactor; CO(2) is released and the remaining methylamine moiety is then transferred to the lipoamide cofactor of the H protein. This chain is Probable glycine dehydrogenase (decarboxylating) subunit 1, found in Thiobacillus denitrificans (strain ATCC 25259 / T1).